The primary structure comprises 131 residues: Large ribosomal subunit protein eL32 (131 aa).

This sequence belongs to the eukaryotic ribosomal protein eL32 family.

The protein is Large ribosomal subunit protein eL32 (RPL32) of Candida glabrata (strain ATCC 2001 / BCRC 20586 / JCM 3761 / NBRC 0622 / NRRL Y-65 / CBS 138) (Yeast).